We begin with the raw amino-acid sequence, 221 residues long: MLDVVKGNLIVSCQALSDEPLHSSFIMGRMAIAAKQGGAAAIRAQGIDDINEIKEVTKLPIIGIIKRNYDDSEIYITPTMKEVDELLKTDCEMIALDATKRKRPNGENIKDLVDAIHAKGRLAMADISTLEEGIEAEKLGFDCVSTTLSGYTPYSKQSNSVDFELLEELVKTVKIPVICEGRINTPEELKKALDLGAYSAVVGGAITRPQQITKRFTDILK.

This sequence belongs to the NanE family.

The catalysed reaction is an N-acyl-D-glucosamine 6-phosphate = an N-acyl-D-mannosamine 6-phosphate. It functions in the pathway amino-sugar metabolism; N-acetylneuraminate degradation; D-fructose 6-phosphate from N-acetylneuraminate: step 3/5. Converts N-acetylmannosamine-6-phosphate (ManNAc-6-P) to N-acetylglucosamine-6-phosphate (GlcNAc-6-P). The chain is Putative N-acetylmannosamine-6-phosphate 2-epimerase from Clostridium perfringens (strain SM101 / Type A).